The primary structure comprises 350 residues: D-alanine--D-alanine ligase (350 aa).

Residues 143–344 (KRILSTFGIS…FKSLINKLIL (202 aa)) enclose the ATP-grasp domain. Position 172–227 (172–227 (INNIKFPCCIKPSNQGSSFGVNVANDFISLKESIDVAFLYSKKILIEPFIQGREIE)) interacts with ATP. Residues D298, E311, and N313 each coordinate Mg(2+).

The protein belongs to the D-alanine--D-alanine ligase family. Requires Mg(2+) as cofactor. Mn(2+) is required as a cofactor.

It localises to the cytoplasm. It carries out the reaction 2 D-alanine + ATP = D-alanyl-D-alanine + ADP + phosphate + H(+). It participates in cell wall biogenesis; peptidoglycan biosynthesis. Functionally, cell wall formation. The sequence is that of D-alanine--D-alanine ligase from Wigglesworthia glossinidia brevipalpis.